Here is a 567-residue protein sequence, read N- to C-terminus: Low-affinity glucose transporter HXT3 (567 aa).

Over residues 1–29 the composition is skewed to polar residues; sequence MNSTPDLISPQKSSENSNADLPSNSSQVM. The segment at 1 to 30 is disordered; that stretch reads MNSTPDLISPQKSSENSNADLPSNSSQVMN. The Cytoplasmic segment spans residues 1–57; that stretch reads MNSTPDLISPQKSSENSNADLPSNSSQVMNMPEEKGVQDDFQAEADQVLTNPNTGKG. Phosphoserine is present on Ser23. Residues 58 to 78 form a helical membrane-spanning segment; the sequence is AYVTVSICCVMVAFGGFVFGW. At 79-113 the chain is on the extracellular side; sequence DTGTISGFVAQTDFLRRFGMKHKDGSYYLSKVRTG. A helical transmembrane segment spans residues 114–134; it reads LIVSIFNIGCAIGGIILAKLG. Residues 135-140 are Cytoplasmic-facing; sequence DMYGRK. The helical transmembrane segment at 141–161 threads the bilayer; that stretch reads MGLIVVVVIYIIGIIIQIASI. The Extracellular segment spans residues 162–171; that stretch reads NKWYQYFIGR. A helical transmembrane segment spans residues 172–192; the sequence is IISGLGVGGIAVLSPMLISEV. Residues 193–198 lie on the Cytoplasmic side of the membrane; it reads APKEMR. A helical transmembrane segment spans residues 199-219; the sequence is GTLVSCYQLMITLGIFLGYCT. Residues 220-233 lie on the Extracellular side of the membrane; that stretch reads NFGTKNYSNSVQWR. Asn225 carries N-linked (GlcNAc...) asparagine glycosylation. The helical transmembrane segment at 234-254 threads the bilayer; sequence VPLGLCFAWALFMIGGMTFVP. Over 255–337 the chain is Cytoplasmic; sequence ESPRYLVEAG…IQSLQQLTGD (83 aa). Residues 338-354 form a helical membrane-spanning segment; that stretch reads NYFFYYGTTVFNAVGMS. Residues 355–360 are Extracellular-facing; it reads DSFETS. Residues 361–378 traverse the membrane as a helical segment; it reads IVFGVVNFFSTCCSLYTV. The Cytoplasmic segment spans residues 379–385; sequence DRFGRRN. A helical membrane pass occupies residues 386–406; it reads CLLYGAIGMVCCYVVYASVGV. Residues 407–428 lie on the Extracellular side of the membrane; sequence TRLWPNGEGNGSSKGAGNCMIV. Asn416 carries N-linked (GlcNAc...) asparagine glycosylation. A helical membrane pass occupies residues 429 to 449; that stretch reads FACFYIFCFATTWAPIAYVVI. Topologically, residues 450–466 are cytoplasmic; it reads SETFPLRVKSKAMSIAT. A helical transmembrane segment spans residues 467 to 487; sequence AANWLWGFLIGFFTPFITGAI. Position 488 (Asn488) is a topological domain, extracellular. The chain crosses the membrane as a helical span at residues 489-509; the sequence is FYYGYVFMGCMVFAYFYVFFF. At 510–567 the chain is on the cytoplasmic side; sequence VPETKGLTLEEVNDMYAEGVLPWKSASWVPTSQRGANYDADALMHDDQPFYKKMFGKK.

Belongs to the major facilitator superfamily. Sugar transporter (TC 2.A.1.1) family.

The protein resides in the membrane. In terms of biological role, low-affinity glucose transporter. This is Low-affinity glucose transporter HXT3 (HXT3) from Saccharomyces cerevisiae (strain ATCC 204508 / S288c) (Baker's yeast).